The sequence spans 391 residues: MKKTVRSLCSTALALTLGFTLLSGPASVQAAGNADYNLAGFSQGNTGGGIISESNTSTYKKVYNATDLALALKKNSGVKVVEIMNDLDLGWNEIPSAAQTSPFAKHNDALTHPVLKQTGVSKITVDGFNGLTIFSANGSKIKHAAITVKRSSNVIIRNLEFDELWEWDESTKGDYDKNDWDYITLEDSSGVWIDHCTFNKAYDGLVDSKKGTSGVTISWSTFKGDDGSANSWVTRQINELEANKASYPMYNYLRSSAVGLSKQDVIAISGPQKKGHLVGATSLESANANLSITLHHNLYKDIQDRMPRLRGGNAHAYNIIMDAADARSAQSRITSAMATAIASKGYKFGITSNGAISTESGAVLVEKSVIKDVQXPCTQQSDRSDQRHVHR.

Positions 1-30 (MKKTVRSLCSTALALTLGFTLLSGPASVQA) are cleaved as a signal peptide. 3 residues coordinate Ca(2+): aspartate 181, aspartate 203, and aspartate 207. Arginine 305 is an active-site residue.

Belongs to the polysaccharide lyase 1 family. Requires Ca(2+) as cofactor.

It is found in the secreted. It catalyses the reaction Eliminative cleavage of (1-&gt;4)-alpha-D-galacturonan to give oligosaccharides with 4-deoxy-alpha-D-galact-4-enuronosyl groups at their non-reducing ends.. It carries out the reaction Eliminative cleavage of (1-&gt;4)-alpha-D-galacturonan methyl ester to give oligosaccharides with 4-deoxy-6-O-methyl-alpha-D-galact-4-enuronosyl groups at their non-reducing ends.. It functions in the pathway glycan metabolism; pectin degradation. Its function is as follows. Catalyzes the depolymerization of both polygalacturonate and pectins of various methyl esterification degree, with an endo mode of action. Shows the highest activity on 20 to 34% methylated pectin but retains 67%, 51%, 25%, and 1% of its maximum activity on polygalacturonate and 8.5%, 55 to 70%, and 90% methylated pectin, respectively. In Paenibacillus amylolyticus, this protein is Pectate lyase B.